A 403-amino-acid polypeptide reads, in one-letter code: D-mannonate dehydratase Caul1427 (403 aa).

Substrate contacts are provided by N38 and H123. The Proton donor/acceptor role is filled by Y160. Position 211 (D211) interacts with Mg(2+). H213 functions as the Proton donor/acceptor in the catalytic mechanism. Residues E237 and E263 each coordinate Mg(2+). Substrate contacts are provided by E263, R284, H313, D317, and E340.

It belongs to the mandelate racemase/muconate lactonizing enzyme family. GalD subfamily. Requires Mg(2+) as cofactor.

The catalysed reaction is D-mannonate = 2-dehydro-3-deoxy-D-gluconate + H2O. It functions in the pathway carbohydrate metabolism; pentose and glucuronate interconversion. Functionally, catalyzes the dehydration of D-mannonate. Has no detectable activity with a panel of 70 other acid sugars (in vitro). This chain is D-mannonate dehydratase Caul1427, found in Caulobacter sp. (strain K31).